A 619-amino-acid chain; its full sequence is DEAD-box ATP-dependent RNA helicase 35B (619 aa).

Low complexity-rich tracts occupy residues 1 to 10 and 49 to 58; these read MAAAAAAAAA and PPTTNAVAVA. A disordered region spans residues 1-72; sequence MAAAAAAAAA…PPRSTSSPAV (72 aa). The Q motif signature appears at 173–201; the sequence is RSFGDLRLPEPILRALRGKGIEKPTPIQV. In terms of domain architecture, Helicase ATP-binding spans 204–388; the sequence is LPVALSGRDM…KSALVKPIIV (185 aa). 217–224 contacts ATP; it reads AFTGSGKT. The short motif at 336–339 is the DEAD box element; that stretch reads DEAD. The Helicase C-terminal domain maps to 399 to 559; the sequence is DVIQEVEYVK…RLPPILADLD (161 aa). The segment at 576–593 adopts a CCHC-type zinc-finger fold; sequence KGCAFCGGLGHRIEACPK.

It belongs to the DEAD box helicase family. DDX41 subfamily.

It carries out the reaction ATP + H2O = ADP + phosphate + H(+). This is DEAD-box ATP-dependent RNA helicase 35B from Oryza sativa subsp. japonica (Rice).